Here is a 392-residue protein sequence, read N- to C-terminus: ER-bound oxygenase mpaB (392 aa).

At 1-21 (MSLPLPPALSELARALPYSRT) the chain is on the lumenal side. The chain crosses the membrane as a helical span at residues 22 to 41 (QWLPIFVGFLIGYPILIRAL). Residues 42–392 (RYKRHGEMKK…WSKYHATTND (351 aa)) lie on the Cytoplasmic side of the membrane. The segment at 352–376 (DLGQKKGPQGDPGNDEGIKDLKDGE) is disordered. Over residues 367–376 (EGIKDLKDGE) the composition is skewed to basic and acidic residues.

Belongs to the mpaB oxygenase family.

It localises to the endoplasmic reticulum membrane. It carries out the reaction 4-farnesyl-3,5-dihydroxy-6-methylphthalide + AH2 + 2 O2 = (4E,8E)-10-(4,6-dihydroxy-7-methyl-3-oxo-1,3-dihydro-2-benzofuran-5-yl)-4,8-dimethyldeca-4,8-dienoate + acetone + A + H2O + H(+). It participates in secondary metabolite biosynthesis; terpenoid biosynthesis. In terms of biological role, ER-bound oxygenase; part of the gene cluster that mediates the biosynthesis of mycophenolic acid (MPA), the first isolated antibiotic natural product in the world obtained from a culture of Penicillium brevicompactum in 1893. MpaB catalyzes the oxidative cleavage the C19-C20 double bond in farnesyl-DHMP (FDHMP) to yield FDHMP-3C via a mycophenolic aldehyde intermediate. The first step of the pathway is the synthesis of 5-methylorsellinic acid (5MOA) by the cytosolic polyketide synthase mpaC. 5MOA is then converted to the phthalide compound 5,7-dihydroxy-4,6-dimethylphthalide (DHMP) by the endoplasmic reticulum-bound cytochrome P450 monooxygenase mpaDE. MpaDE first catalyzes hydroxylation of 5-MOA to 4,6-dihydroxy-2-(hydroxymethyl)-3-methylbenzoic acid (DHMB). MpaDE then acts as a lactone synthase that catalyzes the ring closure to convert DHMB into DHMP. The next step is the prenylation of DHMP by the Golgi apparatus-associated prenyltransferase mpaA to yield farnesyl-DHMP (FDHMP). The ER-bound oxygenase mpaB then mediates the oxidative cleavage the C19-C20 double bond in FDHMP to yield FDHMP-3C via a mycophenolic aldehyde intermediate. The O-methyltransferase mpaG catalyzes the methylation of FDHMP-3C to yield MFDHMP-3C. After the cytosolic methylation of FDHMP-3C, MFDHMP-3C enters into peroxisomes probably via free diffusion due to its low molecular weight. Upon a peroxisomal CoA ligation reaction, catalyzed by a beta-oxidation component enzyme acyl-CoA ligase ACL891, MFDHMP-3C-CoA would then be restricted to peroxisomes for the following beta-oxidation pathway steps. The peroxisomal beta-oxidation machinery than converts MFDHMP-3C-CoA into MPA_CoA, via a beta-oxidation chain-shortening process. Finally mpaH acts as a peroxisomal acyl-CoA hydrolase with high substrate specificity toward MPA-CoA to release the final product MPA. This chain is ER-bound oxygenase mpaB, found in Penicillium brevicompactum.